The sequence spans 267 residues: LexA repressor (267 aa).

A disordered region spans residues 1 to 44 (MSIDESSDNPTPRPKLGRPPKSEADKRAEKEAQKDGKKPALSTR). Over residues 20-38 (PKSEADKRAEKEAQKDGKK) the composition is skewed to basic and acidic residues. The H-T-H motif DNA-binding region spans 65–85 (IREIADAVGLHSTSSVSYHLT). The segment at 111-140 (GQLTNESTKKNAGSPQPTSAAIPEPTTEGE) is disordered. The span at 112–129 (QLTNESTKKNAGSPQPTS) shows a compositional bias: polar residues. Catalysis depends on for autocatalytic cleavage activity residues serine 191 and lysine 228.

This sequence belongs to the peptidase S24 family. As to quaternary structure, homodimer.

It catalyses the reaction Hydrolysis of Ala-|-Gly bond in repressor LexA.. Functionally, represses a number of genes involved in the response to DNA damage (SOS response), including recA and lexA. In the presence of single-stranded DNA, RecA interacts with LexA causing an autocatalytic cleavage which disrupts the DNA-binding part of LexA, leading to derepression of the SOS regulon and eventually DNA repair. In Corynebacterium jeikeium (strain K411), this protein is LexA repressor.